Here is a 2188-residue protein sequence, read N- to C-terminus: Genome polyprotein (2188 aa).

Positions 772–774 match the Cell attachment site motif; the sequence is RGD. Residues 795 to 889 enclose the LRAT domain; sequence LAYLDRGFYK…DIFGTHTLSQ (95 aa). The For protein 2A H-NC role is filled by His805. The For protein 2A H-NC; Acyl-thioester intermediate role is filled by Cys874. The region spanning 1165–1326 is the SF3 helicase domain; sequence FQELARIPNR…KAYSKSGKLN (162 aa). 1193–1200 lines the ATP pocket; that stretch reads GEPGQGKS. Position 1502 is an O-(5'-phospho-RNA)-tyrosine (Tyr1502). One can recognise a Peptidase C3 domain in the interval 1526–1716; that stretch reads APYDGQLEHI…IPFNFLKNDM (191 aa). Catalysis depends on for protease 3C activity residues His1566, Asp1604, and Cys1678. Cys1905 serves as the catalytic Acyl-thioester intermediate. Residues 1953–2067 form the RdRp catalytic domain; that stretch reads DYNYEMDYSQ…SLDREIEPER (115 aa). Residues Asp1959 and Asp2053 each coordinate Mg(2+).

This sequence belongs to the picornaviruses polyprotein family. Interacts with capsid protein VP1 and capsid protein VP3 to form heterotrimeric protomers. Five protomers subsequently associate to form pentamers which serve as building blocks for the capsid. In terms of assembly, interacts with capsid protein VP0, and capsid protein VP3 to form heterotrimeric protomers. Five protomers subsequently associate to form pentamers which serve as building blocks for the capsid. As to quaternary structure, interacts with capsid protein VP0 and capsid protein VP1 to form heterotrimeric protomers. Five protomers subsequently associate to form pentamers which serve as building blocks for the capsid. Homohexamer; forms a hexameric ring structure with 6-fold symmetry characteristic of AAA+ ATPases. In terms of assembly, homodimer. Interacts with host ACBD3. As to quaternary structure, interacts with RNA-directed RNA polymerase. Interacts with Viral protein genome-linked. Mg(2+) is required as a cofactor. VPg is uridylylated by the polymerase and is covalently linked to the 5'-end of genomic RNA. This uridylylated form acts as a nucleotide-peptide primer for the polymerase. Post-translationally, specific enzymatic cleavages yield mature proteins. All cleavages are catalyzed by P3C.

The protein resides in the virion. Its subcellular location is the host cytoplasm. It is found in the host nucleus. It localises to the host nucleolus. The protein localises to the host cytoplasmic vesicle membrane. It catalyses the reaction RNA(n) + a ribonucleoside 5'-triphosphate = RNA(n+1) + diphosphate. The enzyme catalyses a ribonucleoside 5'-triphosphate + H2O = a ribonucleoside 5'-diphosphate + phosphate + H(+). It carries out the reaction Selective cleavage of Gln-|-Gly bond in the poliovirus polyprotein. In other picornavirus reactions Glu may be substituted for Gln, and Ser or Thr for Gly.. Forms an icosahedral capsid of pseudo T=3 symmetry together with capsid proteins VP1 and VP3. The capsid is 300 Angstroms in diameter, composed of 60 copies of each capsid protein and enclosing the viral positive strand RNA genome. Capsid proteins interact with host alpha-V/beta-3 integrin heterodimer to provide virion attachment target cell. This attachment induces virion internalization predominantly through clathrin-mediated endocytosis. Binds packaging signals present in the viral RNA. In terms of biological role, forms an icosahedral capsid of pseudo T=3 symmetry together with capsid proteins VP0 and VP1. The capsid is 300 Angstroms in diameter, composed of 60 copies of each capsid protein and enclosing the viral positive strand RNA genome. Capsid proteins interact with host alpha-V/beta-3 integrin heterodimer to provide virion attachment target cell. This attachment induces virion internalization predominantly through clathrin-mediated endocytosis. Binds packaging signals present in the viral RNA. Its function is as follows. Forms an icosahedral capsid of pseudo T=3 symmetry together with capsid proteins VP0 and VP3. The capsid is 300 Angstroms in diameter, composed of 60 copies of each capsid protein and enclosing the viral positive strand RNA genome. Capsid proteins interact with host alpha-V/beta-3 integrin heterodimer to provide virion attachment target cell. This attachment induces virion internalization predominantly through clathrin-mediated endocytosis. Binds packaging signals present in the viral RNA. Functionally, is not a protease. Plays an essential role in the virus replication cycle by acting as a viroporin. Creates a pore in the host endoplasmic reticulum and as a consequence releases Ca2+ in the cytoplasm of infected cell. In turn, high levels of cytoplasmic calcium may trigger membrane trafficking and transport of viral ER-associated proteins to viroplasms, sites of viral genome replication. In terms of biological role, induces and associates with structural rearrangements of intracellular membranes. Displays RNA-binding, nucleotide binding and NTPase activities. May play a role in virion morphogenesis and viral RNA encapsidation by interacting with the capsid protein VP3. Its function is as follows. Localizes the viral replication complex to the surface of membranous vesicles. It inhibits host cell endoplasmic reticulum-to-Golgi apparatus transport and causes the disassembly of the Golgi complex, possibly through GBF1 interaction. This would result in depletion of MHC, trail receptors and IFN receptors at the host cell surface. Plays an essential role in viral RNA replication by recruiting ACBD3 and PI4KB at the viral replication sites, thereby allowing the formation of the rearranged membranous structures where viral replication takes place. Functionally, acts as a primer for viral RNA replication and remains covalently bound to viral genomic RNA. VPg is uridylylated prior to priming replication into VPg-pUpU. The VPg-pUpU is then used as primer on the genomic RNA poly(A) by the RNA-dependent RNA polymerase to replicate the viral genome. Following genome release from the infecting virion in the cytoplasm, the VPg-RNA linkage is probably removed by host TDP2. During the late stage of the replication cycle, host TDP2 is excluded from sites of viral RNA synthesis and encapsidation, allowing for the generation of progeny virions. Cysteine protease that generates mature viral proteins from the precursor polyprotein. In addition to its proteolytic activity, it binds to viral RNA, and thus influences viral genome replication. RNA and substrate bind cooperatively to the protease. In terms of biological role, replicates the viral genomic RNA on the surface of intracellular membranes. Covalently attaches UMP to a tyrosine of VPg, which is used to prime RNA synthesis. The positive stranded RNA genome is first replicated at virus induced membranous vesicles, creating a dsRNA genomic replication form. This dsRNA is then used as template to synthesize positive stranded RNA genomes. ss(+)RNA genomes are either translated, replicated or encapsidated. The chain is Genome polyprotein from Human parechovirus 5 (strain CT86-6760) (HPeV-5).